Reading from the N-terminus, the 407-residue chain is Serine hydroxymethyltransferase (407 aa).

(6S)-5,6,7,8-tetrahydrofolate is bound by residues leucine 117 and 121–123; that span reads GHL. Residue lysine 226 is modified to N6-(pyridoxal phosphate)lysine. Glutamate 242 lines the (6S)-5,6,7,8-tetrahydrofolate pocket.

It belongs to the SHMT family. As to quaternary structure, homodimer. The cofactor is pyridoxal 5'-phosphate.

It localises to the cytoplasm. It catalyses the reaction (6R)-5,10-methylene-5,6,7,8-tetrahydrofolate + glycine + H2O = (6S)-5,6,7,8-tetrahydrofolate + L-serine. The protein operates within one-carbon metabolism; tetrahydrofolate interconversion. Its pathway is amino-acid biosynthesis; glycine biosynthesis; glycine from L-serine: step 1/1. Its function is as follows. Catalyzes the reversible interconversion of serine and glycine with tetrahydrofolate (THF) serving as the one-carbon carrier. This reaction serves as the major source of one-carbon groups required for the biosynthesis of purines, thymidylate, methionine, and other important biomolecules. Also exhibits THF-independent aldolase activity toward beta-hydroxyamino acids, producing glycine and aldehydes, via a retro-aldol mechanism. The sequence is that of Serine hydroxymethyltransferase from Thermus thermophilus (strain ATCC BAA-163 / DSM 7039 / HB27).